The following is a 61-amino-acid chain: Small ribosomal subunit protein bS21 (61 aa).

Positions 40 to 61 (KPSVKRKKKSEAARKRKNKRRF) are disordered. The segment covering 43–61 (VKRKKKSEAARKRKNKRRF) has biased composition (basic residues).

It belongs to the bacterial ribosomal protein bS21 family.

The polypeptide is Small ribosomal subunit protein bS21 (Ligilactobacillus salivarius (strain UCC118) (Lactobacillus salivarius)).